The chain runs to 145 residues: MELPLGSDLARLVRVWRALVDHRLKPLELTQTHWVTLHNIYHLPPGQSQIQLAKAIGIEQPSLVRTLDQLEEKGLITRHVCAHDRRAKRIMLTESAEPIIQAVNGVISHTRSEVLFGITPEQVDELALLVSRLEKNILALHENQA.

The HTH marR-type domain occupies 2 to 135 (ELPLGSDLAR…LALLVSRLEK (134 aa)). Positions 49–72 (QIQLAKAIGIEQPSLVRTLDQLEE) form a DNA-binding region, H-T-H motif.

This sequence belongs to the SlyA family. As to quaternary structure, homodimer.

Its function is as follows. Transcription regulator that can specifically activate or repress expression of target genes. Regulates genes involved in production of antibiotic and exoenzyme virulence determinants in the phytopathogen. Required for the expression of the virulence protein evf during Drosophila melanogaster infection. The protein is Transcriptional regulator SlyA of Pectobacterium carotovorum subsp. carotovorum (Erwinia carotovora subsp. carotovora).